The sequence spans 194 residues: Small ribosomal subunit protein uS7 (194 aa).

It belongs to the universal ribosomal protein uS7 family. Part of the 30S ribosomal subunit.

Functionally, one of the primary rRNA binding proteins, it binds directly to 16S rRNA where it nucleates assembly of the head domain of the 30S subunit. Is located at the subunit interface close to the decoding center. This chain is Small ribosomal subunit protein uS7, found in Methanococcus vannielii (strain ATCC 35089 / DSM 1224 / JCM 13029 / OCM 148 / SB).